We begin with the raw amino-acid sequence, 184 residues long: ADP-ribosylation factor-like protein 2 (184 aa).

Gly2 is lipidated: N-myristoyl glycine. 23–30 contributes to the GTP binding site; the sequence is GLDNAGKT. Ser45 carries the phosphoserine modification. Residues 66–70 and Gly68 each bind GTP; that span reads DVGGQ. Residue Lys71 forms a Glycyl lysine isopeptide (Lys-Gly) (interchain with G-Cter in ubiquitin) linkage. 125-128 is a GTP binding site; the sequence is NKQD.

The protein belongs to the small GTPase superfamily. Arf family. Found in a complex with ARL2, ARL2BP and SLC25A6. Found in a complex with at least ARL2, PPP2CB, PPP2R1A, PPP2R2A, PPP2R5E and TBCD. Found in a complex with ARL2, ARL2BP and SLC25A4. The GTP-bound form interacts with PDE6D. Interacts with ELMOD2. The GTP-bound form interacts with ARL2BP. Interacts, preferentially in its GDP-bound state, with TBCD. Interacts with UNC119. Post-translationally, not N-myristoylated.

The protein localises to the mitochondrion intermembrane space. It localises to the cytoplasm. The protein resides in the cytoskeleton. It is found in the microtubule organizing center. Its subcellular location is the centrosome. The protein localises to the nucleus. In terms of biological role, small GTP-binding protein which cycles between an inactive GDP-bound and an active GTP-bound form, and the rate of cycling is regulated by guanine nucleotide exchange factors (GEF) and GTPase-activating proteins (GAP). GTP-binding protein that does not act as an allosteric activator of the cholera toxin catalytic subunit. Regulates formation of new microtubules and centrosome integrity. Prevents the TBCD-induced microtubule destruction. Participates in association with TBCD, in the disassembly of the apical junction complexes. Antagonizes the effect of TBCD on epithelial cell detachment and tight and adherens junctions disassembly. Together with ARL2, plays a role in the nuclear translocation, retention and transcriptional activity of STAT3. Component of a regulated secretory pathway involved in Ca(2+)-dependent release of acetylcholine. Required for normal progress through the cell cycle. Also regulates mitochondrial integrity and function. The protein is ADP-ribosylation factor-like protein 2 (ARL2) of Homo sapiens (Human).